The chain runs to 215 residues: ATP phosphoribosyltransferase (215 aa).

It belongs to the ATP phosphoribosyltransferase family. Short subfamily. In terms of assembly, heteromultimer composed of HisG and HisZ subunits.

The protein localises to the cytoplasm. It carries out the reaction 1-(5-phospho-beta-D-ribosyl)-ATP + diphosphate = 5-phospho-alpha-D-ribose 1-diphosphate + ATP. It participates in amino-acid biosynthesis; L-histidine biosynthesis; L-histidine from 5-phospho-alpha-D-ribose 1-diphosphate: step 1/9. In terms of biological role, catalyzes the condensation of ATP and 5-phosphoribose 1-diphosphate to form N'-(5'-phosphoribosyl)-ATP (PR-ATP). Has a crucial role in the pathway because the rate of histidine biosynthesis seems to be controlled primarily by regulation of HisG enzymatic activity. The sequence is that of ATP phosphoribosyltransferase from Cyanothece sp. (strain PCC 7425 / ATCC 29141).